The following is a 159-amino-acid chain: Dihydrofolate reductase (159 aa).

A DHFR domain is found at 2 to 157; it reads TLSILVAHDL…IPHTFLHLIR (156 aa). 6-8 contributes to the substrate binding site; it reads LVA. NADP(+) is bound by residues 7–8 and 15–20; these read VA and IGFENQ. Aspartate 28 is a substrate binding site. NADP(+) is bound at residue 44-47; the sequence is GRKT. Arginine 58 contacts substrate. Residues 63–66 and 93–98 contribute to the NADP(+) site; these read LTSD and FGGQTL. Threonine 112 is a substrate binding site.

The protein belongs to the dihydrofolate reductase family.

It carries out the reaction (6S)-5,6,7,8-tetrahydrofolate + NADP(+) = 7,8-dihydrofolate + NADPH + H(+). Its pathway is cofactor biosynthesis; tetrahydrofolate biosynthesis; 5,6,7,8-tetrahydrofolate from 7,8-dihydrofolate: step 1/1. Functionally, key enzyme in folate metabolism. Catalyzes an essential reaction for de novo glycine and purine synthesis, and for DNA precursor synthesis. The polypeptide is Dihydrofolate reductase (folA) (Staphylococcus aureus (strain COL)).